We begin with the raw amino-acid sequence, 178 residues long: Probable inosine/xanthosine triphosphatase (178 aa).

Belongs to the YjjX NTPase family. In terms of assembly, homodimer. The cofactor is Mg(2+). Mn(2+) is required as a cofactor.

The catalysed reaction is XTP + H2O = XDP + phosphate + H(+). The enzyme catalyses ITP + H2O = IDP + phosphate + H(+). In terms of biological role, phosphatase that hydrolyzes non-canonical purine nucleotides such as XTP and ITP to their respective diphosphate derivatives. Probably excludes non-canonical purines from DNA/RNA precursor pool, thus preventing their incorporation into DNA/RNA and avoiding chromosomal lesions. The polypeptide is Probable inosine/xanthosine triphosphatase (Pyrobaculum calidifontis (strain DSM 21063 / JCM 11548 / VA1)).